Consider the following 604-residue polypeptide: Nuclear cap-binding protein subunit 3 (604 aa).

The segment at 1–36 (MAAVRGLRISVKAEATATTAEPRGPEPEPMEVEEGE) is disordered. Residues 116-177 (DTIYICGVDE…MSSFPDQEKP (62 aa)) form an RNA recognition motif (RRM) domain region. Residues 145–148 (WLDD) carry the WLDD motif; essential for 7-methylguanosine-containing mRNA cap binding motif. Disordered stretches follow at residues 168 to 219 (MSSF…DIEL), 319 to 383 (KHRH…DSDE), and 457 to 604 (QNNN…DTES). The span at 173–198 (DQEKPKGGENNEEKTAEKNKKEKQEE) shows a compositional bias: basic and acidic residues. Acidic residues-rich tracts occupy residues 199-219 (STDD…DIEL) and 331-349 (EPIE…DEDD). Residues 350-370 (RVVVEYRDDLQPFKQSRDRGA) are compositionally biased toward basic and acidic residues. Over residues 458-469 (NNNGLRQPNSIV) the composition is skewed to polar residues. 3 stretches are compositionally biased toward basic and acidic residues: residues 495 to 505 (PRREPISDVHS), 539 to 548 (TQEKTSDKPE), and 569 to 582 (IKEK…KSRL). Positions 595 to 604 (ESSSGSDTES) are enriched in low complexity.

Belongs to the NCBP3 family. In terms of assembly, component of an alternative cap-binding complex (CBC) composed of NCBP1/CBP80 and NCBP3.

The protein resides in the nucleus. It is found in the cytoplasm. Its function is as follows. Associates with NCBP1/CBP80 to form an alternative cap-binding complex (CBC) which plays a key role in mRNA export. NCBP3 serves as adapter protein linking the capped RNAs (m7GpppG-capped RNA) to NCBP1/CBP80. Unlike the conventional CBC with NCBP2 which binds both small nuclear RNA (snRNA) and messenger (mRNA) and is involved in their export from the nucleus, the alternative CBC with NCBP3 does not bind snRNA and associates only with mRNA thereby playing a role in only mRNA export. The polypeptide is Nuclear cap-binding protein subunit 3 (Gallus gallus (Chicken)).